Reading from the N-terminus, the 187-residue chain is Ribonuclease HII (187 aa).

The RNase H type-2 domain maps to 1 to 187 (MICGTDEAGR…NPVKRLLANL (187 aa)). Positions 6, 7, and 98 each coordinate a divalent metal cation.

It belongs to the RNase HII family. Requires Mn(2+) as cofactor. It depends on Mg(2+) as a cofactor.

Its subcellular location is the cytoplasm. The enzyme catalyses Endonucleolytic cleavage to 5'-phosphomonoester.. Its function is as follows. Endonuclease that specifically degrades the RNA of RNA-DNA hybrids. The polypeptide is Ribonuclease HII (Idiomarina loihiensis (strain ATCC BAA-735 / DSM 15497 / L2-TR)).